Here is a 200-residue protein sequence, read N- to C-terminus: MWLSGRGLRCVRGGREVFDGLGFEAAGGEALALVGHNGAGKTSLLRLIAGLLAPAAGTITFDGGEPDTPVAEQAHYLGHRDALKPSLSVTENLAFWREFLGGEPTDLPAAIEAVGLAHAAELPAAYLSAGQRRRLSIARLLVVRRPIWLLDEPTSALDVRGQEAFGRLMSDHLAGGGLIIAATHSPLGIAAREMRIGAAA.

Positions L3 to A200 constitute an ABC transporter domain. Position 35–42 (G35–T42) interacts with ATP.

It belongs to the ABC transporter superfamily. CcmA exporter (TC 3.A.1.107) family. In terms of assembly, the complex is composed of two ATP-binding proteins (CcmA) and two transmembrane proteins (CcmB).

It localises to the cell inner membrane. The catalysed reaction is heme b(in) + ATP + H2O = heme b(out) + ADP + phosphate + H(+). Functionally, part of the ABC transporter complex CcmAB involved in the biogenesis of c-type cytochromes; once thought to export heme, this seems not to be the case, but its exact role is uncertain. Responsible for energy coupling to the transport system. The protein is Cytochrome c biogenesis ATP-binding export protein CcmA of Rhodopseudomonas palustris (strain BisB5).